The sequence spans 379 residues: Carbamoyl phosphate synthase small chain (379 aa).

The interval 1–189 (MSKSALLVLE…GLPEAKADSE (189 aa)) is CPSase. Residues serine 47, glycine 241, and glycine 243 each coordinate L-glutamine. One can recognise a Glutamine amidotransferase type-1 domain in the interval 193–379 (HVVAYDFGAK…FIELIKQFRA (187 aa)). The active-site Nucleophile is cysteine 269. L-glutamine contacts are provided by leucine 270, glutamine 273, asparagine 311, glycine 313, and phenylalanine 314. Residues histidine 353 and glutamate 355 contribute to the active site.

Belongs to the CarA family. In terms of assembly, composed of two chains; the small (or glutamine) chain promotes the hydrolysis of glutamine to ammonia, which is used by the large (or ammonia) chain to synthesize carbamoyl phosphate. Tetramer of heterodimers (alpha,beta)4.

It carries out the reaction hydrogencarbonate + L-glutamine + 2 ATP + H2O = carbamoyl phosphate + L-glutamate + 2 ADP + phosphate + 2 H(+). It catalyses the reaction L-glutamine + H2O = L-glutamate + NH4(+). It functions in the pathway amino-acid biosynthesis; L-arginine biosynthesis; carbamoyl phosphate from bicarbonate: step 1/1. It participates in pyrimidine metabolism; UMP biosynthesis via de novo pathway; (S)-dihydroorotate from bicarbonate: step 1/3. In terms of biological role, small subunit of the glutamine-dependent carbamoyl phosphate synthetase (CPSase). CPSase catalyzes the formation of carbamoyl phosphate from the ammonia moiety of glutamine, carbonate, and phosphate donated by ATP, constituting the first step of 2 biosynthetic pathways, one leading to arginine and/or urea and the other to pyrimidine nucleotides. The small subunit (glutamine amidotransferase) binds and cleaves glutamine to supply the large subunit with the substrate ammonia. In Vibrio cholerae serotype O1 (strain ATCC 39315 / El Tor Inaba N16961), this protein is Carbamoyl phosphate synthase small chain.